Here is a 353-residue protein sequence, read N- to C-terminus: Serine/threonine-protein kinase SRK2G (353 aa).

Residues 4–260 (YDVVKDLGAG…LKEIKNHPWY (257 aa)) enclose the Protein kinase domain. Residues 10 to 18 (LGAGNFGVA) and K33 each bind ATP. The active-site Proton acceptor is the D123. The disordered stretch occupies residues 299–353 (RNPAPSTSAVKSSGSGADEEEEEDVEAEVEEEEDDEDEYEKHVKEAQSCQESDKA). Residues 302 to 313 (APSTSAVKSSGS) are compositionally biased toward polar residues. Residues 315–336 (ADEEEEEDVEAEVEEEEDDEDE) show a composition bias toward acidic residues. Basic and acidic residues predominate over residues 337 to 353 (YEKHVKEAQSCQESDKA).

It belongs to the protein kinase superfamily. Ser/Thr protein kinase family. As to expression, expressed in seedlings.

It is found in the nucleus. The enzyme catalyses L-seryl-[protein] + ATP = O-phospho-L-seryl-[protein] + ADP + H(+). It carries out the reaction L-threonyl-[protein] + ATP = O-phospho-L-threonyl-[protein] + ADP + H(+). The chain is Serine/threonine-protein kinase SRK2G (SRK2G) from Arabidopsis thaliana (Mouse-ear cress).